An 801-amino-acid chain; its full sequence is Quinoprotein glucose dehydrogenase A (801 aa).

The first 33 residues, 1–33 (MNQPTSRSGLTTFTVIIIGLLALFLLIGGIWLA), serve as a signal peptide directing secretion. Helical transmembrane passes span 39-55 (IYYIIAGVLLLIVAWQL), 59-79 (ASTALWFYAALMLGTIIWSVW), 94-108 (ILGILGLWLLVPAVT), and 119-138 (VALSSTLAIAIVLMVYSIFN). Aspartate 471 serves as the catalytic Proton acceptor.

It belongs to the bacterial PQQ dehydrogenase family. Monomer. Pyrroloquinoline quinone serves as cofactor.

Its subcellular location is the cell inner membrane. The enzyme catalyses D-glucose + A = D-glucono-1,5-lactone + AH2. Catalyzes an exceptionally high rate of oxidation of a wide range of aldose sugars, including D-glucose, galactose, arabinose and xylose, and also the disaccharides lactose, cellobiose and maltose. The protein is Quinoprotein glucose dehydrogenase A (gdhA) of Acinetobacter calcoaceticus.